The following is a 302-amino-acid chain: Alpha-ketoglutarate-dependent dioxygenase alkB homolog 4 (302 aa).

N-acetylalanine is present on A2. Phosphothreonine is present on T8. One can recognise a Fe2OG dioxygenase domain in the interval 150–274; sequence PVEQCNLDYC…RVCVTFRELS (125 aa). The Fe cation site is built by H169, D171, and H254. A 2-oxoglutarate-binding site is contributed by R265.

Belongs to the alkB family. As to quaternary structure, interacts with ZFHX3, MLLT3, MLLT1, HSF4, EP300, TES, EIF3C, MTMR6 and PSMA6. The cofactor is Fe(2+). Widely expressed, with highest expression in pancreas, ovary and spleen.

The protein localises to the cytoplasm. It localises to the nucleus. Its subcellular location is the nucleolus. It is found in the midbody. The enzyme catalyses an N(6)-methyl-2'-deoxyadenosine in DNA + 2-oxoglutarate + O2 = a 2'-deoxyadenosine in DNA + formaldehyde + succinate + CO2. The catalysed reaction is N(6)-methyl-L-lysyl-[protein] + 2-oxoglutarate + O2 = L-lysyl-[protein] + formaldehyde + succinate + CO2. Dioxygenase that mediates demethylation of actin monomethylated at 'Lys-84' (K84me1), thereby acting as a regulator of actomyosin-processes. Demethylation of actin K84me1 is required for maintaining actomyosin dynamics supporting normal cleavage furrow ingression during cytokinesis and cell migration. In addition to proteins, also demethylates DNA: specifically demethylates DNA methylated on the 6th position of adenine (N(6)-methyladenosine) DNA, thereby regulating Polycomb silencing. This chain is Alpha-ketoglutarate-dependent dioxygenase alkB homolog 4, found in Homo sapiens (Human).